Consider the following 243-residue polypeptide: Probable transcriptional regulatory protein Bpet3099 (243 aa).

Residues 1-21 (MAGHSKWANIQHRKGRQDAKR) form a disordered region.

The protein belongs to the TACO1 family.

The protein resides in the cytoplasm. The polypeptide is Probable transcriptional regulatory protein Bpet3099 (Bordetella petrii (strain ATCC BAA-461 / DSM 12804 / CCUG 43448)).